The chain runs to 391 residues: Processive diacylglycerol beta-glucosyltransferase (391 aa).

It belongs to the glycosyltransferase 28 family. UgtP subfamily.

Its subcellular location is the cell membrane. The catalysed reaction is a 1,2-diacyl-3-O-(beta-D-glucopyranosyl)-sn-glycerol + UDP-alpha-D-glucose = a 1,2-diacyl-3-O-(beta-D-Glc-(1-&gt;6)-beta-D-Glc)-sn-glycerol + UDP + H(+). It carries out the reaction a 1,2-diacyl-sn-glycerol + UDP-alpha-D-glucose = a 1,2-diacyl-3-O-(beta-D-glucopyranosyl)-sn-glycerol + UDP + H(+). It participates in glycolipid metabolism; diglucosyl-diacylglycerol biosynthesis. Processive glucosyltransferase involved in the biosynthesis of both the bilayer- and non-bilayer-forming membrane glucolipids. Is able to successively transfer two glucosyl residues to diacylglycerol (DAG), thereby catalyzing the formation of beta-monoglucosyl-DAG (3-O-(beta-D-glucopyranosyl)-1,2-diacyl-sn-glycerol) and beta-diglucosyl-DAG (3-O-(beta-D-glucopyranosyl-beta-(1-&gt;6)-D-glucopyranosyl)-1,2-diacyl-sn-glycerol). Beta-diglucosyl-DAG is the predominant glycolipid found in Bacillales and is also used as a membrane anchor for lipoteichoic acid (LTA). In Staphylococcus epidermidis (strain ATCC 12228 / FDA PCI 1200), this protein is Processive diacylglycerol beta-glucosyltransferase.